A 301-amino-acid chain; its full sequence is Lipoyl synthase (301 aa).

Residues cysteine 37, cysteine 42, cysteine 48, cysteine 63, cysteine 67, cysteine 70, and serine 276 each contribute to the [4Fe-4S] cluster site. Positions 49 to 265 (WSKKHATVMI…ERIARTKGFL (217 aa)) constitute a Radical SAM core domain.

The protein belongs to the radical SAM superfamily. Lipoyl synthase family. The cofactor is [4Fe-4S] cluster.

The protein localises to the cytoplasm. The enzyme catalyses [[Fe-S] cluster scaffold protein carrying a second [4Fe-4S](2+) cluster] + N(6)-octanoyl-L-lysyl-[protein] + 2 oxidized [2Fe-2S]-[ferredoxin] + 2 S-adenosyl-L-methionine + 4 H(+) = [[Fe-S] cluster scaffold protein] + N(6)-[(R)-dihydrolipoyl]-L-lysyl-[protein] + 4 Fe(3+) + 2 hydrogen sulfide + 2 5'-deoxyadenosine + 2 L-methionine + 2 reduced [2Fe-2S]-[ferredoxin]. It participates in protein modification; protein lipoylation via endogenous pathway; protein N(6)-(lipoyl)lysine from octanoyl-[acyl-carrier-protein]: step 2/2. Catalyzes the radical-mediated insertion of two sulfur atoms into the C-6 and C-8 positions of the octanoyl moiety bound to the lipoyl domains of lipoate-dependent enzymes, thereby converting the octanoylated domains into lipoylated derivatives. In Rickettsia felis (strain ATCC VR-1525 / URRWXCal2) (Rickettsia azadi), this protein is Lipoyl synthase.